A 649-amino-acid chain; its full sequence is Leucine-rich repeat transmembrane protein FLRT3 (649 aa).

The N-terminal stretch at Met-1–Ala-28 is a signal peptide. Residues Lys-29–Glu-58 form the LRRNT domain. The Extracellular segment spans residues Lys-29–Pro-528. Disulfide bonds link Cys-31-Cys-37 and Cys-35-Cys-44. Residues Asp-38–Asn-67 are interaction with ADGRL3. LRR repeat units lie at residues Asp-59–Lys-80, Lys-84–Lys-104, Tyr-105–Lys-126, Tyr-129–Phe-150, Tyr-155–Arg-175, Thr-176–Gly-197, Ser-200–Val-220, Asn-226–Thr-247, Asn-248–Tyr-269, and Gln-272–Asp-293. Asn-226 is a glycosylation site (N-linked (GlcNAc...) asparagine). Residues Asn-282 and Asn-296 are each glycosylated (N-linked (GlcNAc...) asparagine). The LRRCT domain occupies Asn-305 to Asp-357. Residues Cys-309 and Cys-334 are joined by a disulfide bond. Positions Lys-387–Ser-407 are disordered. Positions Pro-389 to Gln-401 are enriched in basic and acidic residues. The Fibronectin type-III domain maps to Lys-409–Leu-504. Residues Leu-529–Cys-549 traverse the membrane as a helical segment. The Cytoplasmic segment spans residues Trp-550 to Ser-649. A disordered region spans residues Leu-622–Ser-649.

As to quaternary structure, monomer and homodimer. Self-associates (via leucine-rich repeats), giving rise to homooligomers. Interacts with FGFR1. Interacts (via extracellular domain) with ADGRL1/LPHN1 and LPHN2 (via olfactomedin-like domain). Interacts (via extracellular domain) with ADGRL3 (via olfactomedin-like domain); the interaction is direct. Interacts (via extracellular domain) with UNC5B and UNC5D (via extracellular domain); the interaction is direct. Identified in complexes composed of FLRT3, ADGRL3 and UNC5B, respectively FLRT3, ADGRL3 and UNC5D. May also interact (via extracellular domain) with UNC5A and UNC5C. Interacts (via cytoplasmic domain) with ROBO1. In terms of processing, N-glycosylated. Proteolytic cleavage in the juxtamembrane region gives rise to a soluble ectodomain. Cleavage is probably effected by a metalloprotease. Expressed in kidney, brain, pancreas, skeletal muscle, lung, liver, placenta, and heart.

The protein localises to the cell membrane. It localises to the presynaptic cell membrane. It is found in the endoplasmic reticulum membrane. The protein resides in the cell junction. Its subcellular location is the focal adhesion. The protein localises to the secreted. It localises to the cell projection. It is found in the axon. The protein resides in the growth cone membrane. Functionally, functions in cell-cell adhesion, cell migration and axon guidance, exerting an attractive or repulsive role depending on its interaction partners. Plays a role in the spatial organization of brain neurons. Plays a role in vascular development in the retina. Plays a role in cell-cell adhesion via its interaction with ADGRL3 and probably also other latrophilins that are expressed at the surface of adjacent cells. Interaction with the intracellular domain of ROBO1 mediates axon attraction towards cells expressing NTN1. Mediates axon growth cone collapse and plays a repulsive role in neuron guidance via its interaction with UNC5B, and possibly also other UNC-5 family members. Promotes neurite outgrowth (in vitro). Mediates cell-cell contacts that promote an increase both in neurite number and in neurite length. Plays a role in the regulation of the density of glutamaergic synapses. Plays a role in fibroblast growth factor-mediated signaling cascades. Required for normal morphogenesis during embryonic development, but not for normal embryonic patterning. Required for normal ventral closure, headfold fusion and definitive endoderm migration during embryonic development. Required for the formation of a normal basement membrane and the maintenance of a normal anterior visceral endoderm during embryonic development. The polypeptide is Leucine-rich repeat transmembrane protein FLRT3 (FLRT3) (Homo sapiens (Human)).